We begin with the raw amino-acid sequence, 104 residues long: Small ribosomal subunit protein uS10 (104 aa).

This sequence belongs to the universal ribosomal protein uS10 family. As to quaternary structure, part of the 30S ribosomal subunit.

Functionally, involved in the binding of tRNA to the ribosomes. The sequence is that of Small ribosomal subunit protein uS10 from Albidiferax ferrireducens (strain ATCC BAA-621 / DSM 15236 / T118) (Rhodoferax ferrireducens).